The following is a 1187-amino-acid chain: Disease resistance protein TAO1 (1187 aa).

The 165-residue stretch at 38–202 folds into the TIR domain; it reads WLHPVFLSFR…KISKDVSDVL (165 aa). E113 is an active-site residue. The 262-residue stretch at 217–478 folds into the NB-ARC domain; it reads EAHTTEITSL…FFRRERIETL (262 aa). LRR repeat units lie at residues 498 to 522, 611 to 633, 635 to 658, 660 to 679, 680 to 703, 704 to 727, 728 to 750, 752 to 775, 799 to 823, 824 to 849, 870 to 894, 895 to 918, 920 to 942, and 953 to 974; these read DKSL…GLDI, SRKL…KFNP, FLVK…PIRN, KWMD…FSTA, TNLQ…IGNA, TNLL…IGNL, TNLK…SFGN, TSLK…IGNI, NTNL…MLNL, TRLE…VINL, ATNL…IWNI, TNLQ…VENA, NLQS…IWRI, and CSSL…LILD.

It carries out the reaction NAD(+) + H2O = ADP-D-ribose + nicotinamide + H(+). In terms of biological role, TIR-NB-LRR receptor-like protein that contributes to disease resistance induced by the Pseudomonas syringae type III effector AvrB. Acts additively with RPM1 to generate a full disease resistance response to P.syringae expressing this type III effector. This Arabidopsis thaliana (Mouse-ear cress) protein is Disease resistance protein TAO1.